A 356-amino-acid chain; its full sequence is Thrombomodulin (356 aa).

Topologically, residues 1 to 296 (RGARGETEGR…SPAPAGPLHS (296 aa)) are extracellular. 2 consecutive EGF-like domains span residues 17–57 (GAWA…RSCG) and 60–98 (AEHP…HRCE). Intrachain disulfides connect cysteine 21-cysteine 32, cysteine 28-cysteine 41, cysteine 43-cysteine 56, cysteine 64-cysteine 72, cysteine 68-cysteine 82, cysteine 84-cysteine 97, cysteine 103-cysteine 114, cysteine 110-cysteine 123, cysteine 125-cysteine 136, cysteine 143-cysteine 152, cysteine 148-cysteine 162, cysteine 164-cysteine 178, cysteine 182-cysteine 191, cysteine 187-cysteine 199, cysteine 201-cysteine 213, cysteine 219-cysteine 228, cysteine 224-cysteine 237, and cysteine 239-cysteine 253. The EGF-like 3; calcium-binding domain maps to 99 to 137 (DVDDCAQLPSPCPQRCVNTEGGFQCHCDTGYELVDGECV). EGF-like domains are found at residues 139–179 (PVDP…HKCQ) and 178–214 (CQMF…STCT). The EGF-like 6; calcium-binding domain occupies 215 to 254 (DINECDTNICPGQCHNLPGTYECICGPDSALSGQIGIDCD). Positions 255–290 (PTQVNEERGTPEDYGGSGEPPVSPTPGATARPSPAP) are disordered. O-linked (Xyl...) (chondroitin sulfate) serine glycosylation is present at serine 271. A helical membrane pass occupies residues 297 to 320 (GVLVGISIASLSLVVALLALLCHL). Topologically, residues 321 to 356 (RKKQGASRGELEYKCGVPAKELMLQQVKTERTPQKL) are cytoplasmic.

Interacts with ITGAL, ITGAM and ITGB2. Interacts with thrombin/F2; this interaction switches the specificity of thrombin from a procoagulant to an anticoagulant and antifibrinolytic protease. Interacts with ANGP1 and ANGP2; these interactions significantly inhibit the generation of activated PC and TAFIa/CPB2 by the thrombin/thrombomodulin complex. Interacts with PF4; this interaction enhances generation of activated protein C. Interacts with HMGB1; this interaction inhibits HMGB1 inflammatory activity. In terms of tissue distribution, endothelial cells are unique in synthesizing thrombomodulin.

It is found in the membrane. In terms of biological role, endothelial cell receptor that plays a critical role in regulating several physiological processes including hemostasis, coagulation, fibrinolysis, inflammation, and angiogenesis. Acts as a cofactor for thrombin activation of protein C/PROC on the surface of vascular endothelial cells leading to initiation of the activated protein C anticoagulant pathway. Also accelerates the activation of the plasma carboxypeptidase B2/CPB2, which catalyzes removal of C-terminal basic amino acids from its substrates including kinins or anaphylatoxins leading to fibrinolysis inhibition. Plays critical protective roles in changing the cleavage specificity of protease-activated receptor 1/PAR1, inhibiting endothelial cell permeability and inflammation. Suppresses inflammation distinctly from its anticoagulant cofactor activity by sequestering HMGB1 thereby preventing it from engaging cellular receptors such as RAGE and contributing to the inflammatory response. The protein is Thrombomodulin (THBD) of Bos taurus (Bovine).